Consider the following 144-residue polypeptide: Angiogenin-4 (144 aa).

Positions 1–24 (MTMSPCPLLLVFVLGLVVIPPTLA) are cleaved as a signal peptide. The active-site Proton acceptor is His36. 3 disulfides stabilise this stretch: Cys49–Cys103, Cys62–Cys114, and Cys80–Cys129. The short motif at 54-58 (KERKL) is the Nucleolar localization signal element. His136 functions as the Proton donor in the catalytic mechanism.

Belongs to the pancreatic ribonuclease family. Detected in small intestine, caecum and colon, with the highest expression in Paneth cells in the intestinal epithelium.

It localises to the secreted. Its subcellular location is the cytoplasmic vesicle. The protein resides in the secretory vesicle lumen. It is found in the nucleus. The protein localises to the nucleolus. Its function is as follows. Has bactericidal activity against E.faecalis and L.monocytogenes, but not against L.innocua and E.coli. Promotes angiogenesis (in vitro). Has low ribonuclease activity (in vitro). Promotes proliferation of melanoma cells, but not of endothelial cells or fibroblasts (in vitro). The chain is Angiogenin-4 (Ang4) from Mus musculus (Mouse).